A 120-amino-acid chain; its full sequence is LOB domain-containing protein 8 (120 aa).

One can recognise an LOB domain in the interval 8–109; it reads RPCCVCITKN…AYLHELEEKI (102 aa).

Belongs to the LOB domain-containing protein family.

The chain is LOB domain-containing protein 8 (LBD8) from Arabidopsis thaliana (Mouse-ear cress).